The sequence spans 637 residues: Phosphomethylpyrimidine synthase (637 aa).

Substrate is bound by residues asparagine 242, methionine 271, tyrosine 300, histidine 336, 356–358, 397–400, and glutamate 436; these read SRG and DGLR. Histidine 440 contributes to the Zn(2+) binding site. Tyrosine 463 serves as a coordination point for substrate. Histidine 504 contacts Zn(2+). [4Fe-4S] cluster contacts are provided by cysteine 584, cysteine 587, and cysteine 592.

This sequence belongs to the ThiC family. In terms of assembly, homodimer. The cofactor is [4Fe-4S] cluster.

It carries out the reaction 5-amino-1-(5-phospho-beta-D-ribosyl)imidazole + S-adenosyl-L-methionine = 4-amino-2-methyl-5-(phosphooxymethyl)pyrimidine + CO + 5'-deoxyadenosine + formate + L-methionine + 3 H(+). It participates in cofactor biosynthesis; thiamine diphosphate biosynthesis. In terms of biological role, catalyzes the synthesis of the hydroxymethylpyrimidine phosphate (HMP-P) moiety of thiamine from aminoimidazole ribotide (AIR) in a radical S-adenosyl-L-methionine (SAM)-dependent reaction. This is Phosphomethylpyrimidine synthase from Bordetella bronchiseptica (strain ATCC BAA-588 / NCTC 13252 / RB50) (Alcaligenes bronchisepticus).